The chain runs to 371 residues: Histidinol-phosphate aminotransferase (371 aa).

N6-(pyridoxal phosphate)lysine is present on lysine 228.

The protein belongs to the class-II pyridoxal-phosphate-dependent aminotransferase family. Histidinol-phosphate aminotransferase subfamily. The cofactor is pyridoxal 5'-phosphate.

The enzyme catalyses L-histidinol phosphate + 2-oxoglutarate = 3-(imidazol-4-yl)-2-oxopropyl phosphate + L-glutamate. The protein operates within amino-acid biosynthesis; L-histidine biosynthesis; L-histidine from 5-phospho-alpha-D-ribose 1-diphosphate: step 7/9. The polypeptide is Histidinol-phosphate aminotransferase (Methanococcus maripaludis (strain C5 / ATCC BAA-1333)).